The following is a 163-amino-acid chain: Photosystem II extrinsic protein V (163 aa).

Residues 1 to 26 (MFRRLIGVVVATALLTFQLIVGSATA) form the signal peptide. Heme c-binding residues include Cys-63, Cys-66, His-67, and His-118.

The protein belongs to the cytochrome c family. PsbV subfamily. As to quaternary structure, PSII is composed of 1 copy each of membrane proteins PsbA, PsbB, PsbC, PsbD, PsbE, PsbF, PsbH, PsbI, PsbJ, PsbK, PsbL, PsbM, PsbT, PsbX, PsbY, PsbZ, Psb30/Ycf12, peripheral proteins PsbO, CyanoQ (PsbQ), PsbU, PsbV and a large number of cofactors. It forms dimeric complexes. Heme c is required as a cofactor.

Its subcellular location is the cellular thylakoid membrane. Functionally, one of the extrinsic, lumenal subunits of photosystem II (PSII). PSII is a light-driven water plastoquinone oxidoreductase, using light energy to abstract electrons from H(2)O, generating a proton gradient subsequently used for ATP formation. The extrinsic proteins stabilize the structure of photosystem II oxygen-evolving complex (OEC), the ion environment of oxygen evolution and protect the OEC against heat-induced inactivation. Low-potential cytochrome c that plays a role in the OEC of PSII. The protein is Photosystem II extrinsic protein V of Nostoc sp. (strain PCC 7120 / SAG 25.82 / UTEX 2576).